The primary structure comprises 270 residues: MLQACKMEGFPLVPPPSEDLVPYDTDLYQRQTHEYYPYLSSDGESHSDHYWDFHPHHVHSEFESFAENNFTELQSVQPPQLQQLYRHMELEQMHVLDTPMVPPHPSLGHQVSYLPRMCLQYPSLSPAQPSSDEEEGERQSPPLEVSDGEADGLEPGPGLLPGETGSKKKIRLYQFLLDLLRSGDMKDSIWWVDKDKGTFQFSSKHKEALAHRWGIQKGNRKKMTYQKMARALRNYGKTGEVKKVKKKLTYQFSGEVLGRGGLAERRHPPH.

The segment at 123 to 164 is disordered; the sequence is SLSPAQPSSDEEEGERQSPPLEVSDGEADGLEPGPGLLPGET. Phosphoserine is present on residues serine 140 and serine 146. The segment covering 153–164 has biased composition (low complexity); it reads LEPGPGLLPGET. The segment at residues 170 to 253 is a DNA-binding region (ETS); it reads IRLYQFLLDL…VKKKLTYQFS (84 aa). 4 residues coordinate DNA: lysine 217, arginine 230, arginine 233, and lysine 243.

The protein belongs to the ETS family. In terms of assembly, binds DNA as a monomer. Can form homomers. Directly interacts with CEBPD/NF-IL6-beta; this interaction does not affect DNA-binding properties of each partner. Interacts with NONO/p54(nrb). Interacts with RUNX1/AML1. Interacts with GFI1; the interaction represses SPI1 transcriptional activity, hence blocks SPI1-induced macrophage differentiation of myeloid progenitor cells. Interacts with CEBPE. Interacts with IRF4/Pip and IRF8. Interacts with JUN. Interacts with RB1. Interacts with TBP. In terms of tissue distribution, in the bone marrow, concentrated in hematopoietic stem cell, lymphoid progenitor, myeloid lineage (granulocyte macrophage progenitors, classical dendritic cells, monocytes) and B-cell clusters. Among B-cells, predominantly expressed in pre-B1 cells. Expressed in germinal center B-cells.

It is found in the nucleus. Its activity is regulated as follows. Transcriptional activity at macrophage-specific genes is inhibited by interaction with GFI1, which results in the inhibition of SPI1-induced macrophage differentiation of myeloid progenitor cells, but not that of the granulocyte lineage. Its function is as follows. Pioneer transcription factor, which controls hematopoietic cell fate by decompacting stem cell heterochromatin and allowing other transcription factors to enter otherwise inaccessible genomic sites. Once in open chromatin, can directly control gene expression by binding genetic regulatory elements and can also more broadly influence transcription by recruiting transcription factors, such as interferon regulatory factors (IRFs), to otherwise inaccessible genomic regions. Transcriptionally activates genes important for myeloid and lymphoid lineages, such as CSF1R. Transcriptional activation from certain promoters, possibly containing low affinity binding sites, is achieved cooperatively with other transcription factors. FCER1A transactivation is achieved in cooperation with GATA1. May be particularly important for the pro- to pre-B cell transition. Binds (via the ETS domain) onto the purine-rich DNA core sequence 5'-GAGGAA-3', also known as the PU-box. In vitro can bind RNA and interfere with pre-mRNA splicing. This is Transcription factor PU.1 (SPI1) from Homo sapiens (Human).